The chain runs to 607 residues: Guanine nucleotide-binding protein-like 1 (607 aa).

The span at 1–14 (MPRKKPFSVKQKKK) shows a compositional bias: basic residues. The tract at residues 1–81 (MPRKKPFSVK…GPRGYDPNRY (81 aa)) is disordered. Basic and acidic residues predominate over residues 15–26 (QLQDKRERKRGL). Ser32, Ser33, and Ser34 each carry phosphoserine. Thr48 and Thr50 each carry phosphothreonine. Phosphoserine is present on residues Ser51 and Ser68. Positions 178–418 (WRQLWRVLEM…LCDCPGLIFP (241 aa)) constitute a CP-type G domain. 225-228 (NKVD) is a binding site for GTP. Position 324 is a phosphoserine (Ser324). GTP contacts are provided by residues 367–374 (GFPNVGKS) and 411–415 (DCPGL). The disordered stretch occupies residues 544–607 (GRVGPAGDEE…PYALLGEGEC (64 aa)). Over residues 550–585 (GDEEEEEEEELSSSCEEEGEEDRDADEEGEGDEDTP) the composition is skewed to acidic residues. Phosphoserine occurs at positions 561, 562, and 563.

This sequence belongs to the TRAFAC class YlqF/YawG GTPase family.

In terms of biological role, possible regulatory or functional link with the histocompatibility cluster. In Rattus norvegicus (Rat), this protein is Guanine nucleotide-binding protein-like 1 (Gnl1).